The chain runs to 509 residues: DEAD-box ATP-dependent RNA helicase CshA (509 aa).

The Q motif motif lies at 2–30; the sequence is QNFKELGISDKTVQTLEAMGFKEPTPIQK. One can recognise a Helicase ATP-binding domain in the interval 33–203; that stretch reads IPYALEGDDI…QQFMKAPKII (171 aa). 46–53 contributes to the ATP binding site; it reads AQTGTGKT. The DEAD box motif lies at 150 to 153; sequence DEAD. In terms of domain architecture, Helicase C-terminal spans 214–375; that stretch reads QIDEYYTIVK…LRPPHRKEVL (162 aa). 2 stretches are compositionally biased toward basic residues: residues 440–459 and 467–482; these read ARKNRSSKGGSRRSNHKRGN and RRSKGSKGQSSKKKNQ. Residues 440 to 509 are disordered; the sequence is ARKNRSSKGG…KGRTFADHQK (70 aa). Residues 483-492 are compositionally biased toward basic and acidic residues; the sequence is KKFDRRDKQQ.

Belongs to the DEAD box helicase family. CshA subfamily. As to quaternary structure, oligomerizes, may be a member of the RNA degradosome.

The protein resides in the cytoplasm. It carries out the reaction ATP + H2O = ADP + phosphate + H(+). In terms of biological role, DEAD-box RNA helicase possibly involved in RNA degradation. Unwinds dsRNA in both 5'- and 3'-directions, has RNA-dependent ATPase activity. This chain is DEAD-box ATP-dependent RNA helicase CshA, found in Staphylococcus epidermidis (strain ATCC 35984 / DSM 28319 / BCRC 17069 / CCUG 31568 / BM 3577 / RP62A).